The chain runs to 662 residues: MVHVRYGGQNGEQYELAISENHIVVRTESRSSLISDRPFEAAPVSPQARNILNQFELSTRFSQAGVEVLHVKEPSHDGALRDTAREILNQEPEVQFAGRVLIDPVSQQPIVYTENLFVKFDHEEDVSFCQEILGRYGLTIKRQLEYARNAYFVSAPSNTGLAIFDISERLLNEESVELCHPELVREFRQRQAFPPQWHLKQTTIGGKTINAHANVEAAWKLSDGTGTIIAIIDDGVDIDHEEFRSSGKIVAPRDVTRKTNFPTPGNRDNHGTACAGVACGNGNFGASGVAPGAKLMPIRFVSALGSQDEADSFVWAAQNGADVISCSWGPPDGTWWDDKDPLHKQKVPLPDSTRLAMDYAINKGRNGKGCVILFAAGNGNESVDNDGYASYEKVIAVAACNDFGTRSAYSDFGTAVWCAFPSNNGNPSQTPGIWTADRTGVVGYNSGNTNLGDQAGNYTNSFGGTSSACPGAAGVAALILSRNPNLRWDEVRDIIKRSCDRIDPVGGNYNAEGRSPFYGYGRINALKAVELALPAQPEPVSIFTAVQDVPINDLQISQLSLAIANTNPIKSIKVTVDIEHTYIGDLVVSLNPPAESGVLPIILHDRKGGGADDIKQTYDEVSTPGLTALKGKIPQGTWTLEVADKAQADTGKIRSLTIELGF.

The 334-residue stretch at 196–529 (QWHLKQTTIG…YGRINALKAV (334 aa)) folds into the Peptidase S8 domain. Active-site charge relay system residues include aspartate 233, histidine 270, and serine 466. One can recognise a P/Homo B domain in the interval 535–662 (AQPEPVSIFT…IRSLTIELGF (128 aa)).

It belongs to the peptidase S8 family.

It is found in the cytoplasm. Degrades phycobiliproteins in vitro. Has a substrate specificity similar to that of trypsin. The polypeptide is Calcium-dependent protease (prcA) (Trichormus variabilis (strain ATCC 29413 / PCC 7937) (Anabaena variabilis)).